The following is a 524-amino-acid chain: Cytokinin dehydrogenase 7 (524 aa).

In terms of domain architecture, FAD-binding PCMH-type spans 58-238; it reads NCVKPLAVVR…TRARVLLQPA (181 aa). FAD-binding residues include A91, G93, N94, and G95. Residue H96 is modified to Pros-8alpha-FAD histidine. FAD is bound by residues S97, Q101, D162, T167, S173, V177, I228, Y479, S514, and Q517.

The protein belongs to the oxygen-dependent FAD-linked oxidoreductase family. FAD is required as a cofactor. As to expression, expressed in the vasculature of roots, hypocotyls, cotyledons and leaves of young seedlings. In flowers, expressed in the transmitting tissue of the gynoecium prior to pollination. Expressed in the mature embryo sac with maximum activity in the egg cell and the synergids.

The protein resides in the cytoplasm. It is found in the cytosol. The enzyme catalyses N(6)-dimethylallyladenine + A + H2O = 3-methyl-2-butenal + adenine + AH2. In terms of biological role, catalyzes the oxidation of cytokinins, a family of N(6)-substituted adenine derivatives that are plant hormones, where the substituent is an isopentenyl group. Catalyzes in vitro the oxidation of various types of cytokinin nucleotides that are known as direct products of cytokinin biosynthesis. The polypeptide is Cytokinin dehydrogenase 7 (CKX7) (Arabidopsis thaliana (Mouse-ear cress)).